The sequence spans 570 residues: Proline--tRNA ligase (570 aa).

This sequence belongs to the class-II aminoacyl-tRNA synthetase family. ProS type 1 subfamily. In terms of assembly, homodimer.

The protein localises to the cytoplasm. It catalyses the reaction tRNA(Pro) + L-proline + ATP = L-prolyl-tRNA(Pro) + AMP + diphosphate. In terms of biological role, catalyzes the attachment of proline to tRNA(Pro) in a two-step reaction: proline is first activated by ATP to form Pro-AMP and then transferred to the acceptor end of tRNA(Pro). As ProRS can inadvertently accommodate and process non-cognate amino acids such as alanine and cysteine, to avoid such errors it has two additional distinct editing activities against alanine. One activity is designated as 'pretransfer' editing and involves the tRNA(Pro)-independent hydrolysis of activated Ala-AMP. The other activity is designated 'posttransfer' editing and involves deacylation of mischarged Ala-tRNA(Pro). The misacylated Cys-tRNA(Pro) is not edited by ProRS. The polypeptide is Proline--tRNA ligase (Geobacter metallireducens (strain ATCC 53774 / DSM 7210 / GS-15)).